A 341-amino-acid polypeptide reads, in one-letter code: Phosphoribosylformylglycinamidine cyclo-ligase (341 aa).

The protein belongs to the AIR synthase family.

It localises to the cytoplasm. The enzyme catalyses 2-formamido-N(1)-(5-O-phospho-beta-D-ribosyl)acetamidine + ATP = 5-amino-1-(5-phospho-beta-D-ribosyl)imidazole + ADP + phosphate + H(+). It participates in purine metabolism; IMP biosynthesis via de novo pathway; 5-amino-1-(5-phospho-D-ribosyl)imidazole from N(2)-formyl-N(1)-(5-phospho-D-ribosyl)glycinamide: step 2/2. The polypeptide is Phosphoribosylformylglycinamidine cyclo-ligase (Caldicellulosiruptor bescii (strain ATCC BAA-1888 / DSM 6725 / KCTC 15123 / Z-1320) (Anaerocellum thermophilum)).